The chain runs to 258 residues: Imidazole glycerol phosphate synthase subunit HisF (258 aa).

Catalysis depends on residues D11 and D130.

This sequence belongs to the HisA/HisF family. In terms of assembly, heterodimer of HisH and HisF.

It localises to the cytoplasm. It carries out the reaction 5-[(5-phospho-1-deoxy-D-ribulos-1-ylimino)methylamino]-1-(5-phospho-beta-D-ribosyl)imidazole-4-carboxamide + L-glutamine = D-erythro-1-(imidazol-4-yl)glycerol 3-phosphate + 5-amino-1-(5-phospho-beta-D-ribosyl)imidazole-4-carboxamide + L-glutamate + H(+). The protein operates within amino-acid biosynthesis; L-histidine biosynthesis; L-histidine from 5-phospho-alpha-D-ribose 1-diphosphate: step 5/9. IGPS catalyzes the conversion of PRFAR and glutamine to IGP, AICAR and glutamate. The HisF subunit catalyzes the cyclization activity that produces IGP and AICAR from PRFAR using the ammonia provided by the HisH subunit. The sequence is that of Imidazole glycerol phosphate synthase subunit HisF from Escherichia coli O17:K52:H18 (strain UMN026 / ExPEC).